The following is a 75-amino-acid chain: UPF0270 protein PST_1436 (75 aa).

Belongs to the UPF0270 family.

The polypeptide is UPF0270 protein PST_1436 (Stutzerimonas stutzeri (strain A1501) (Pseudomonas stutzeri)).